We begin with the raw amino-acid sequence, 318 residues long: Methionyl-tRNA formyltransferase (318 aa).

A (6S)-5,6,7,8-tetrahydrofolate-binding site is contributed by 113–116; it reads SLLP.

It belongs to the Fmt family.

It carries out the reaction L-methionyl-tRNA(fMet) + (6R)-10-formyltetrahydrofolate = N-formyl-L-methionyl-tRNA(fMet) + (6S)-5,6,7,8-tetrahydrofolate + H(+). In terms of biological role, attaches a formyl group to the free amino group of methionyl-tRNA(fMet). The formyl group appears to play a dual role in the initiator identity of N-formylmethionyl-tRNA by promoting its recognition by IF2 and preventing the misappropriation of this tRNA by the elongation apparatus. The chain is Methionyl-tRNA formyltransferase from Hahella chejuensis (strain KCTC 2396).